The chain runs to 164 residues: SsrA-binding protein (164 aa).

It belongs to the SmpB family.

The protein resides in the cytoplasm. Required for rescue of stalled ribosomes mediated by trans-translation. Binds to transfer-messenger RNA (tmRNA), required for stable association of tmRNA with ribosomes. tmRNA and SmpB together mimic tRNA shape, replacing the anticodon stem-loop with SmpB. tmRNA is encoded by the ssrA gene; the 2 termini fold to resemble tRNA(Ala) and it encodes a 'tag peptide', a short internal open reading frame. During trans-translation Ala-aminoacylated tmRNA acts like a tRNA, entering the A-site of stalled ribosomes, displacing the stalled mRNA. The ribosome then switches to translate the ORF on the tmRNA; the nascent peptide is terminated with the 'tag peptide' encoded by the tmRNA and targeted for degradation. The ribosome is freed to recommence translation, which seems to be the essential function of trans-translation. This chain is SsrA-binding protein, found in Corynebacterium efficiens (strain DSM 44549 / YS-314 / AJ 12310 / JCM 11189 / NBRC 100395).